The following is a 306-amino-acid chain: Flavin adenine dinucleotide synthase (306 aa).

FAD-binding positions include S59, I107, G164, 182-185 (DSNW), R190, and R300.

Belongs to the PAPS reductase family. FAD1 subfamily.

The protein localises to the cytoplasm. The catalysed reaction is FMN + ATP + H(+) = FAD + diphosphate. It functions in the pathway cofactor biosynthesis; FAD biosynthesis; FAD from FMN: step 1/1. Its function is as follows. Catalyzes the adenylation of flavin mononucleotide (FMN) to form flavin adenine dinucleotide (FAD) coenzyme. The protein is Flavin adenine dinucleotide synthase of Saccharomyces cerevisiae (strain ATCC 204508 / S288c) (Baker's yeast).